Reading from the N-terminus, the 341-residue chain is Tetraacyldisaccharide 4'-kinase (341 aa).

Residue 64–71 (AVGGSGKT) coordinates ATP.

It belongs to the LpxK family.

It carries out the reaction a lipid A disaccharide + ATP = a lipid IVA + ADP + H(+). It functions in the pathway glycolipid biosynthesis; lipid IV(A) biosynthesis; lipid IV(A) from (3R)-3-hydroxytetradecanoyl-[acyl-carrier-protein] and UDP-N-acetyl-alpha-D-glucosamine: step 6/6. Its function is as follows. Transfers the gamma-phosphate of ATP to the 4'-position of a tetraacyldisaccharide 1-phosphate intermediate (termed DS-1-P) to form tetraacyldisaccharide 1,4'-bis-phosphate (lipid IVA). The sequence is that of Tetraacyldisaccharide 4'-kinase from Azoarcus sp. (strain BH72).